A 102-amino-acid chain; its full sequence is NADH-quinone oxidoreductase subunit K (102 aa).

The next 3 membrane-spanning stretches (helical) occupy residues 6-26 (MEHG…GLMV), 30-50 (ILFI…AFVV), and 62-82 (VMFI…LAIL).

Belongs to the complex I subunit 4L family. As to quaternary structure, NDH-1 is composed of 13 different subunits. Subunits NuoA, H, J, K, L, M, N constitute the membrane sector of the complex.

The protein localises to the cell inner membrane. It catalyses the reaction a quinone + NADH + 5 H(+)(in) = a quinol + NAD(+) + 4 H(+)(out). NDH-1 shuttles electrons from NADH, via FMN and iron-sulfur (Fe-S) centers, to quinones in the respiratory chain. The immediate electron acceptor for the enzyme in this species is believed to be ubiquinone. Couples the redox reaction to proton translocation (for every two electrons transferred, four hydrogen ions are translocated across the cytoplasmic membrane), and thus conserves the redox energy in a proton gradient. The protein is NADH-quinone oxidoreductase subunit K of Ectopseudomonas mendocina (strain ymp) (Pseudomonas mendocina).